An 855-amino-acid polypeptide reads, in one-letter code: Glucans biosynthesis glucosyltransferase H (855 aa).

6 helical membrane passes run 142–162 (ILLT…KGIL), 196–216 (ILVL…TALM), 515–535 (VFLT…FLVL), 572–592 (LFST…ILIW), 606–626 (TLSM…RMIF), and 682–702 (FLWW…VSVI).

It belongs to the glycosyltransferase 2 family. OpgH subfamily.

It is found in the cell inner membrane. It participates in glycan metabolism; osmoregulated periplasmic glucan (OPG) biosynthesis. Involved in the biosynthesis of osmoregulated periplasmic glucans (OPGs). The protein is Glucans biosynthesis glucosyltransferase H of Pseudomonas entomophila (strain L48).